The chain runs to 224 residues: Methylamine utilization ferredoxin-type protein MauM (224 aa).

Positions 1–41 (MEARMTGRRKVTRRDAMADAARAVGVACLGGFSLAALVRTA) are cleaved as a signal peptide. 4Fe-4S ferredoxin-type domains are found at residues 54–84 (ALPE…LAEW), 91–124 (GTPF…RDIP), 133–169 (VAVL…LEPQ), and 177–208 (MIPV…VLPR). Residues cysteine 64, cysteine 67, cysteine 70, cysteine 74, cysteine 102, cysteine 105, cysteine 110, cysteine 114, cysteine 142, cysteine 150, cysteine 153, cysteine 157, cysteine 186, cysteine 189, cysteine 192, and cysteine 196 each contribute to the [4Fe-4S] cluster site.

It participates in one-carbon metabolism; methylamine degradation. Its function is as follows. Involved in electron transfer. The sequence is that of Methylamine utilization ferredoxin-type protein MauM (mauM) from Paracoccus denitrificans (strain Pd 1222).